We begin with the raw amino-acid sequence, 443 residues long: MEEDIDTRKINNSFLRDHSYATEADIISAVEFNHTGELLATGDKGGRVVIFQREQESKNQVHRRGEYNVYSTFQSHEPEFDYLKSLEIEEKINKIRWLPQQNAAYFLLSTNDKTVKLWKVSERDKRPEGYNLKDEEGRLRDPATITTLRVPVLRPMDLMVEATPRRVFANAHTYHINSISVNSDYETYMSADDLRINLWNFEITNQSFNIADIKPANMEELTEVITAAEFHPHHCNTFVYSSSKGTIRLCDMRASACVTGTPNFLKEPEDPSNRSFSLKLSSSISDVKFSQQWEDIMTRDYLTVKVWDLNMENRPIETYQVHNYLRSKLCSLYENDCIFDKFECVWNGSDSVIMTGSYNNFFRMFDRNTKRDVTLEASRENSKPRAILKPRKVCVGGKRRKDEISVDSLDFSKKILHTAWHPSENIIAVAATNNLYIFQDKVN.

WD repeat units follow at residues 22–61 (TEAD…KNQV), 87–128 (EIEE…KRPE), 171–209 (AHTY…QSFN), and 220–260 (ELTE…CVTG). At S275 the chain carries Phosphoserine. WD repeat units lie at residues 279-317 (KLSS…RPIE), 334-375 (ENDC…DVTL), and 410-442 (DFSK…QDKV). The residue at position 298 (T298) is a Phosphothreonine.

Belongs to the phosphatase 2A regulatory subunit B family. PP2A consists of a common heterodimeric core enzyme, composed of a 36 kDa catalytic subunit (subunit C) and a 65 kDa constant regulatory subunit (PR65 or subunit A), that associates with a variety of regulatory subunits. Proteins that associate with the core dimer include three families of regulatory subunits B (the R2/B/PR55/B55, R3/B''/PR72/PR130/PR59 and R5/B'/B56 families), the 48 kDa variable regulatory subunit, viral proteins, and cell signaling molecules. Interacts with TOMM22. Interacts with IER5 (via N- and C-terminal regions). As to expression, brain.

The protein resides in the cytoplasm. The protein localises to the cytoskeleton. Its subcellular location is the membrane. The B regulatory subunit might modulate substrate selectivity and catalytic activity, and might also direct the localization of the catalytic enzyme to a particular subcellular compartment. The protein is Serine/threonine-protein phosphatase 2A 55 kDa regulatory subunit B beta isoform (PPP2R2B) of Sus scrofa (Pig).